We begin with the raw amino-acid sequence, 315 residues long: 4-diphosphocytidyl-2-C-methyl-D-erythritol kinase (315 aa).

Lys26 is an active-site residue. Residue 111–121 participates in ATP binding; sequence PLAGGLAGGSA. Asp153 is an active-site residue.

It belongs to the GHMP kinase family. IspE subfamily.

The enzyme catalyses 4-CDP-2-C-methyl-D-erythritol + ATP = 4-CDP-2-C-methyl-D-erythritol 2-phosphate + ADP + H(+). Its pathway is isoprenoid biosynthesis; isopentenyl diphosphate biosynthesis via DXP pathway; isopentenyl diphosphate from 1-deoxy-D-xylulose 5-phosphate: step 3/6. Functionally, catalyzes the phosphorylation of the position 2 hydroxy group of 4-diphosphocytidyl-2C-methyl-D-erythritol. The chain is 4-diphosphocytidyl-2-C-methyl-D-erythritol kinase from Salinispora arenicola (strain CNS-205).